A 347-amino-acid polypeptide reads, in one-letter code: NADH-ubiquinone oxidoreductase chain 2 (347 aa).

The next 11 membrane-spanning stretches (helical) occupy residues 3-23, 25-45, 66-86, 96-116, 122-142, 149-169, 178-198, 201-221, 237-257, 274-294, and 323-343; these read PPIL…VMLS, HWLL…PVLM, ASML…QWVV, IMMT…FWVP, ITLT…MSVL, INTN…GWGG, IMAY…IYNP, MILN…LFML, FPLI…LPPL, NMII…YFYL, and TILL…TPML.

It belongs to the complex I subunit 2 family. As to quaternary structure, core subunit of respiratory chain NADH dehydrogenase (Complex I) which is composed of 45 different subunits. Interacts with TMEM242.

Its subcellular location is the mitochondrion inner membrane. The catalysed reaction is a ubiquinone + NADH + 5 H(+)(in) = a ubiquinol + NAD(+) + 4 H(+)(out). In terms of biological role, core subunit of the mitochondrial membrane respiratory chain NADH dehydrogenase (Complex I) which catalyzes electron transfer from NADH through the respiratory chain, using ubiquinone as an electron acceptor. Essential for the catalytic activity and assembly of complex I. This chain is NADH-ubiquinone oxidoreductase chain 2, found in Canis rufus (Red wolf).